The following is a 221-amino-acid chain: Guanylate kinase (221 aa).

The 179-residue stretch at 20–198 (GSLFMVVAPS…ALAELRTVVQ (179 aa)) folds into the Guanylate kinase-like domain. Residue 27 to 34 (APSGAGKS) participates in ATP binding.

Belongs to the guanylate kinase family.

It localises to the cytoplasm. The catalysed reaction is GMP + ATP = GDP + ADP. Functionally, essential for recycling GMP and indirectly, cGMP. This chain is Guanylate kinase, found in Ralstonia nicotianae (strain ATCC BAA-1114 / GMI1000) (Ralstonia solanacearum).